The primary structure comprises 239 residues: Ribonuclease HII (239 aa).

Positions 30 to 221 (GPVAGVDEVG…VRRVATRSNG (192 aa)) constitute an RNase H type-2 domain. A divalent metal cation contacts are provided by Asp-36, Glu-37, and Asp-130. A disordered region spans residues 219 to 239 (SNGAAAAEREADPPQERDGTG). Residues 225–239 (AEREADPPQERDGTG) are compositionally biased toward basic and acidic residues.

It belongs to the RNase HII family. Mn(2+) is required as a cofactor. Requires Mg(2+) as cofactor.

It is found in the cytoplasm. It catalyses the reaction Endonucleolytic cleavage to 5'-phosphomonoester.. Its function is as follows. Endonuclease that specifically degrades the RNA of RNA-DNA hybrids. The sequence is that of Ribonuclease HII from Mycobacterium marinum (strain ATCC BAA-535 / M).